Consider the following 607-residue polypeptide: Autophagy-related protein 16-1 (607 aa).

Positions 13–43 (WKRHIAEELRRRDRLQRQAFEEIILQYTKLL) are interaction with ATG5. The stretch at 79 to 230 (DSQLQEMAQL…QKELAEAAKE (152 aa)) forms a coiled coil. Phosphoserine is present on Ser139. Positions 207 to 230 (AENEKDSRRRQARLQKELAEAAKE) are WIPI2-binding. An RB1CC1-binding region spans residues 230–242 (EPLPVEQDDDIEV). Ser269 and Ser287 each carry phosphoserine. Positions 296 to 299 (DIMD) match the Caspase cleavage motif. WD repeat units follow at residues 320 to 359 (AHDG…CEFK), 364 to 403 (GSNA…LRHT), 406 to 445 (GHSG…CIKT), 447 to 484 (FAGS…VVRE), 486 to 525 (ELLG…VKQT), 532 to 573 (KCGS…KVLS), and 575 to 607 (QHSS…WAQP).

This sequence belongs to the WD repeat ATG16 family. As to quaternary structure, homodimer. Homooligomer. Heterooligomer with ATG16L2. Interacts with WIPI1. Interacts with WIPI2. Interacts with RB1CC1; the interaction is required for ULK1 complex-dependent autophagy. Interacts with ATG5. Part of the minor complex composed of 4 sets of ATG12-ATG5 and ATG16L1 (400 kDa); this complex interacts with ATG3 leading to disruption of ATG7 interaction and promotion of ATG8-like proteins lipidation. Part of the major complex composed of 8 sets of ATG12-ATG5 and ATG16L1 (800 kDa). Interacts with RAB33B (GTP- and GDP-bound forms); the complex consists of a tetramer where two RAB33B molecules bind independently one molecule of the ATG16L1 homodimer; the interaction promotes ATG12-ATG5-ATG16L1 complex recruitment to phagophores. Interacts (via WD repeats) with TMEM59; the interaction mediates unconventional autophagic activity of TMEM59. Interacts with TLR2. Interacts (via WD repeats) with MEFV. Interacts (via N-terminal) with CLTC. Interacts with NOD1. Interacts with NOD2. Interacts with TUFM. Interacts with TRIM16. Interacts (via WD repeats) with SPATA33. Interacts with Irgm1. Post-translationally, proteolytic cleavage by activated CASP3 leads to degradation and may regulate autophagy upon cellular stress and apoptotic stimuli. Phosphorylation at Ser-139 promotes association with the ATG12-ATG5 conjugate to form the ATG12-ATG5-ATG16L1 complex. As to expression, widely expressed. Expressed in the testis and sperm midpiece (at protein level). In terms of tissue distribution, expressed in liver. Highly expressed in liver. As to expression, expressed in brain.

The protein resides in the cytoplasm. It localises to the preautophagosomal structure membrane. Its subcellular location is the endosome membrane. It is found in the lysosome membrane. Functionally, plays an essential role in both canonical and non-canonical autophagy: interacts with ATG12-ATG5 to mediate the lipidation to ATG8 family proteins (MAP1LC3A, MAP1LC3B, MAP1LC3C, GABARAPL1, GABARAPL2 and GABARAP). Acts as a molecular hub, coordinating autophagy pathways via distinct domains that support either canonical or non-canonical signaling. During canonical autophagy, interacts with ATG12-ATG5 to mediate the conjugation of phosphatidylethanolamine (PE) to ATG8 proteins, to produce a membrane-bound activated form of ATG8. Thereby, controls the elongation of the nascent autophagosomal membrane. As part of the ATG8 conjugation system with ATG5 and ATG12, required for recruitment of LRRK2 to stressed lysosomes and induction of LRRK2 kinase activity in response to lysosomal stress. Also involved in non-canonical autophagy, a parallel pathway involving conjugation of ATG8 proteins to single membranes at endolysosomal compartments, probably by catalyzing conjugation of phosphatidylserine (PS) to ATG8. Non-canonical autophagy plays a key role in epithelial cells to limit lethal infection by influenza A (IAV) virus. Regulates mitochondrial antiviral signaling (MAVS)-dependent type I interferon (IFN-I) production. Negatively regulates NOD1- and NOD2-driven inflammatory cytokine response. Instead, promotes an autophagy-dependent antibacterial pathway together with NOD1 or NOD2. Plays a role in regulating morphology and function of Paneth cell. The sequence is that of Autophagy-related protein 16-1 from Mus musculus (Mouse).